Here is a 156-residue protein sequence, read N- to C-terminus: Snaclec A10 (156 aa).

Positions 1-23 (MGRSISVSFGLLVVFLSLSGIGA) are cleaved as a signal peptide. Cystine bridges form between cysteine 27-cysteine 38, cysteine 55-cysteine 154, and cysteine 129-cysteine 146. Residues 34–155 (YDQHCYQAVD…CGQPYRFTCE (122 aa)) form the C-type lectin domain.

The protein belongs to the snaclec family. Heterodimer; disulfide-linked. Expressed by the venom gland.

It localises to the secreted. Interferes with one step of hemostasis (modulation of platelet aggregation, or coagulation cascade, for example). This Macrovipera lebetinus (Levantine viper) protein is Snaclec A10.